The primary structure comprises 430 residues: Adenylosuccinate synthetase (430 aa).

GTP contacts are provided by residues 12-18 (GDEGKGK) and 40-42 (GHT). Asp13 acts as the Proton acceptor in catalysis. The Mg(2+) site is built by Asp13 and Gly40. IMP is bound by residues 13-16 (DEGK), 38-41 (NAGH), Thr128, Arg142, Gln223, Thr238, and Arg302. The active-site Proton donor is the His41. Position 298–304 (298–304 (TTTGRPR)) interacts with substrate. Residues Arg304, 330-332 (SID), and 412-414 (SVG) contribute to the GTP site.

The protein belongs to the adenylosuccinate synthetase family. Homodimer. It depends on Mg(2+) as a cofactor.

It is found in the cytoplasm. It catalyses the reaction IMP + L-aspartate + GTP = N(6)-(1,2-dicarboxyethyl)-AMP + GDP + phosphate + 2 H(+). It participates in purine metabolism; AMP biosynthesis via de novo pathway; AMP from IMP: step 1/2. Functionally, plays an important role in the de novo pathway of purine nucleotide biosynthesis. Catalyzes the first committed step in the biosynthesis of AMP from IMP. In Streptococcus agalactiae serotype III (strain NEM316), this protein is Adenylosuccinate synthetase.